Here is a 233-residue protein sequence, read N- to C-terminus: Large ribosomal subunit protein uL1 (233 aa).

This sequence belongs to the universal ribosomal protein uL1 family. As to quaternary structure, part of the 50S ribosomal subunit.

Binds directly to 23S rRNA. The L1 stalk is quite mobile in the ribosome, and is involved in E site tRNA release. In terms of biological role, protein L1 is also a translational repressor protein, it controls the translation of the L11 operon by binding to its mRNA. This chain is Large ribosomal subunit protein uL1, found in Shewanella amazonensis (strain ATCC BAA-1098 / SB2B).